Reading from the N-terminus, the 118-residue chain is Fluoride-specific ion channel FluC 2 (118 aa).

4 helical membrane-spanning segments follow: residues 1 to 21 (MMEA…RFAI), 33 to 53 (FPIA…YIIG), 55 to 75 (GVTT…FTTF), and 93 to 113 (ILFL…FLGM). Residues G70 and T73 each coordinate Na(+).

It belongs to the fluoride channel Fluc/FEX (TC 1.A.43) family.

It localises to the cell membrane. It carries out the reaction fluoride(in) = fluoride(out). With respect to regulation, na(+) is not transported, but it plays an essential structural role and its presence is essential for fluoride channel function. Its function is as follows. Fluoride-specific ion channel. Important for reducing fluoride concentration in the cell, thus reducing its toxicity. The sequence is that of Fluoride-specific ion channel FluC 2 from Bacillus cereus (strain ATCC 10987 / NRS 248).